Consider the following 401-residue polypeptide: Glycerol-3-phosphate dehydrogenase [NAD(+)] 1 (401 aa).

NAD(+)-binding positions include 40 to 45 (GSGNWG), Phe-128, Lys-151, and Ala-184. Lys-151 serves as a coordination point for substrate. The active-site Proton acceptor is Lys-244. The NAD(+) site is built by Arg-309 and Gln-338. A substrate-binding site is contributed by 309–310 (RN).

Belongs to the NAD-dependent glycerol-3-phosphate dehydrogenase family.

It localises to the cytoplasm. The enzyme catalyses sn-glycerol 3-phosphate + NAD(+) = dihydroxyacetone phosphate + NADH + H(+). In Zygosaccharomyces rouxii, this protein is Glycerol-3-phosphate dehydrogenase [NAD(+)] 1 (GPD1).